A 431-amino-acid polypeptide reads, in one-letter code: Dual-specificity RNA methyltransferase RlmN (431 aa).

The segment at 1–26 (MATASLDTARPERRAGSDPFIEKTPE) is disordered. Basic and acidic residues predominate over residues 9–26 (ARPERRAGSDPFIEKTPE). Glu138 serves as the catalytic Proton acceptor. The region spanning 144-394 (ANDRGTLCVS…VRTPRGRDIL (251 aa)) is the Radical SAM core domain. Residues Cys151 and Cys397 are joined by a disulfide bond. Cys158, Cys162, and Cys165 together coordinate [4Fe-4S] cluster. Residues 223–224 (GE), Ser255, 277–279 (SLH), and Asn354 each bind S-adenosyl-L-methionine. Cys397 acts as the S-methylcysteine intermediate in catalysis.

This sequence belongs to the radical SAM superfamily. RlmN family. [4Fe-4S] cluster serves as cofactor.

It localises to the cytoplasm. It carries out the reaction adenosine(2503) in 23S rRNA + 2 reduced [2Fe-2S]-[ferredoxin] + 2 S-adenosyl-L-methionine = 2-methyladenosine(2503) in 23S rRNA + 5'-deoxyadenosine + L-methionine + 2 oxidized [2Fe-2S]-[ferredoxin] + S-adenosyl-L-homocysteine. The catalysed reaction is adenosine(37) in tRNA + 2 reduced [2Fe-2S]-[ferredoxin] + 2 S-adenosyl-L-methionine = 2-methyladenosine(37) in tRNA + 5'-deoxyadenosine + L-methionine + 2 oxidized [2Fe-2S]-[ferredoxin] + S-adenosyl-L-homocysteine. Functionally, specifically methylates position 2 of adenine 2503 in 23S rRNA and position 2 of adenine 37 in tRNAs. m2A2503 modification seems to play a crucial role in the proofreading step occurring at the peptidyl transferase center and thus would serve to optimize ribosomal fidelity. This is Dual-specificity RNA methyltransferase RlmN from Methylobacterium sp. (strain 4-46).